The following is a 226-amino-acid chain: uncharacterized protein (226 aa).

This sequence to L.innocua lin2408 and lin2600.

This is an uncharacterized protein from Listeria innocua serovar 6a (strain ATCC BAA-680 / CLIP 11262).